The sequence spans 347 residues: GPN-loop GTPase 2 (347 aa).

12–17 (GSGKST) contributes to the GTP binding site. A Gly-Pro-Asn (GPN)-loop; involved in dimer interface motif is present at residues 69–71 (GPN). 175–178 (SKID) is a GTP binding site.

Belongs to the GPN-loop GTPase family. In terms of assembly, heterodimers with NPA3/GPN1 or GPN3. Binds to RNA polymerase II (RNAPII).

Its subcellular location is the cytoplasm. In terms of biological role, small GTPase required for proper localization of RNA polymerase II and III (RNAPII and RNAPIII). May act at an RNAP assembly step prior to nuclear import. Required for establishment of sister chromatid cohesion. The chain is GPN-loop GTPase 2 from Saccharomyces cerevisiae (strain ATCC 204508 / S288c) (Baker's yeast).